An 84-amino-acid chain; its full sequence is Large ribosomal subunit protein bL27 (84 aa).

The segment at 1-22 is disordered; that stretch reads MAHKKAGGSTRNGRDSESKRLG.

The protein belongs to the bacterial ribosomal protein bL27 family.

This is Large ribosomal subunit protein bL27 from Shewanella baltica (strain OS223).